Consider the following 129-residue polypeptide: uncharacterized protein (129 aa).

The signal sequence occupies residues 1-20 (MIYPLFRICILGAFLLGSYA).

This is an uncharacterized protein from Saccharomyces cerevisiae (strain ATCC 204508 / S288c) (Baker's yeast).